Reading from the N-terminus, the 1522-residue chain is Lysophospholipase NTE1 (1522 aa).

Topologically, residues 1–73 (MVDGTYVNSS…SLLVYLINGT (73 aa)) are lumenal. The helical transmembrane segment at 74-94 (VPFYLVVLGSVFTPIIVYLIL) threads the bilayer. Residues 95–1522 (RSRVLSAYSR…IHLLHRRNSI (1428 aa)) are Cytoplasmic-facing. Disordered stretches follow at residues 443-468 (SVQESIHRATLRSKNVHAHNSPTPNK), 485-523 (DLLSNVPLSRKGSKTASSSSVSIPRISSLRHQKEAASSP), and 535-556 (SQNFAPLSSSSPMSVSEKPSVV). Low complexity-rich tracts occupy residues 498–511 (KTASSSSVSIPRIS) and 540–555 (PLSSSSPMSVSEKPSV). Residues 661–782 (PINV…LTKL) and 778–918 (TLTK…VAHK) contribute to the a nucleoside 3',5'-cyclic phosphate site. 2 disordered regions span residues 828–852 (QKSKNEERLSRPTTQRKKRKDDNQP) and 1125–1145 (SSQNPSERVDSKAPPIPGAPP). A PNPLA domain is found at 1219–1383 (LVLGGGGARG…LDNLPVLEMK (165 aa)). Positions 1223–1228 (GGGARG) match the GXGXXG motif. Positions 1250 to 1254 (GTSIG) match the GXSXG motif. Serine 1252 functions as the Nucleophile in the catalytic mechanism. Residue aspartate 1370 is the Proton acceptor of the active site. The DGA/G motif lies at 1370–1372 (DGG).

Belongs to the NTE family.

It localises to the endoplasmic reticulum membrane. The enzyme catalyses a 1-acyl-sn-glycero-3-phosphocholine + H2O = sn-glycerol 3-phosphocholine + a fatty acid + H(+). Its activity is regulated as follows. Inhibited by organophosphorus esters. Its function is as follows. Intracellular phospholipase B that catalyzes the double deacylation of phosphatidylcholine (PC) to glycerophosphocholine (GroPCho). Plays an important role in membrane lipid homeostasis. Responsible for the rapid PC turnover in response to inositol, elevated temperatures, or when choline is present in the growth medium. The sequence is that of Lysophospholipase NTE1 (NTE1) from Eremothecium gossypii (strain ATCC 10895 / CBS 109.51 / FGSC 9923 / NRRL Y-1056) (Yeast).